A 504-amino-acid chain; its full sequence is 2,3-bisphosphoglycerate-independent phosphoglycerate mutase (504 aa).

Positions 11 and 61 each coordinate Mn(2+). The active-site Phosphoserine intermediate is the Ser61. Substrate is bound by residues His122, 152 to 153 (RD), Arg183, Arg189, 255 to 258 (RNDR), and Lys329. Mn(2+)-binding residues include Asp396, His400, Asp437, His438, and His455.

This sequence belongs to the BPG-independent phosphoglycerate mutase family. As to quaternary structure, monomer. Requires Mn(2+) as cofactor.

The catalysed reaction is (2R)-2-phosphoglycerate = (2R)-3-phosphoglycerate. It participates in carbohydrate degradation; glycolysis; pyruvate from D-glyceraldehyde 3-phosphate: step 3/5. In terms of biological role, catalyzes the interconversion of 2-phosphoglycerate and 3-phosphoglycerate. The polypeptide is 2,3-bisphosphoglycerate-independent phosphoglycerate mutase (Bacteroides fragilis (strain YCH46)).